Consider the following 727-residue polypeptide: Engulfment and cell motility protein 1 (727 aa).

A Phosphotyrosine; by HCK modification is found at Y18. N6-acetyllysine is present on residues K100 and K105. Y216 is subject to Phosphotyrosine; by HCK. The 174-residue stretch at 319–492 (AQRDIIFELR…VVKEQVMRAL (174 aa)) folds into the ELMO domain. A Phosphoserine modification is found at S344. A phosphotyrosine; by HCK mark is found at Y395 and Y511. In terms of domain architecture, PH spans 555 to 676 (RLVEGTCFRK…DGLNALLGKD (122 aa)). The SH3-binding motif lies at 707–714 (PDAPPPIP). Y720 carries the phosphotyrosine; by HCK modification.

As to quaternary structure, interacts directly with the SH3-domain of DOCK1 via its SH3-binding site. Probably forms a heterotrimeric complex with DOCK1 and RAC1. Interacts with PLEKHG6. Interacts with HCK (via SH3 domain). Interacts with ADGRB1. Interacts with ADGRB3. Interacts with DOCK5. Post-translationally, phosphorylated by HCK.

The protein localises to the cytoplasm. It localises to the cell membrane. Involved in cytoskeletal rearrangements required for phagocytosis of apoptotic cells and cell motility. Acts in association with DOCK1 and CRK. Was initially proposed to be required in complex with DOCK1 to activate Rac Rho small GTPases. May enhance the guanine nucleotide exchange factor (GEF) activity of DOCK1. In Mus musculus (Mouse), this protein is Engulfment and cell motility protein 1 (Elmo1).